A 259-amino-acid polypeptide reads, in one-letter code: Methyltransferase afvD (259 aa).

It belongs to the class I-like SAM-binding methyltransferase superfamily.

It participates in secondary metabolite biosynthesis. Methyltransferase; part of the gene cluster that mediates the biosynthesis of aflavarin, a bicoumarin that exhibits anti-insectan activity against the fungivorous beetle C.hemipterus. In Aspergillus flavus (strain ATCC 200026 / FGSC A1120 / IAM 13836 / NRRL 3357 / JCM 12722 / SRRC 167), this protein is Methyltransferase afvD.